Reading from the N-terminus, the 547-residue chain is Signal recognition particle receptor subunit alpha homolog (547 aa).

A disordered region spans residues 124–174 (LENETDTKSLPVEANNDNSARKKNEYEMKKKGAQSKQTNAPKKGKKQLRKW). Residues 142 to 153 (SARKKNEYEMKK) show a composition bias toward basic and acidic residues. The tract at residues 343-546 (YTISLIGVNG…SVDWVVDQLM (204 aa)) is NG domain. GTP is bound by residues 349–356 (GVNGVGKS), 437–441 (DTAGR), and 498–501 (SKVD).

This sequence belongs to the GTP-binding SRP family. Heterodimer of an alpha and a beta chain.

It is found in the endoplasmic reticulum membrane. Its function is as follows. Component of the SRP (signal recognition particle) receptor (SR). Ensures, in conjunction with the signal recognition particle, the correct targeting of the nascent secretory proteins to the endoplasmic reticulum membrane system. GTP hydrolysis may enhance the fidelity of and provide unidirectionality to the targeting reaction. The polypeptide is Signal recognition particle receptor subunit alpha homolog (srp101) (Schizosaccharomyces pombe (strain 972 / ATCC 24843) (Fission yeast)).